The chain runs to 438 residues: UPF0229 protein Smed_1028 (438 aa).

The disordered stretch occupies residues 55–107 (PARGVNEPAFQPDSNSGERRHVLPGNREFAAGDRIPKRGGGGGAGNAGAGTGQ). Residues 92 to 105 (RGGGGGAGNAGAGT) show a composition bias toward gly residues.

Belongs to the UPF0229 family.

In Sinorhizobium medicae (strain WSM419) (Ensifer medicae), this protein is UPF0229 protein Smed_1028.